Reading from the N-terminus, the 378-residue chain is MSHLDNGFRSLTLQRFPATDDVNPLQAWEAADEYLLQQLDDTEIRGPVLILNDAFGALSCALAEHKPYSIGDSYISELATRENLRLNGIDESSVKFLDSTADYPQQPGVVLIKVPKTLALLEQQLRALRKVVTSDTRIIAGAKARDIHTSTLELFEKVLGPTTTTLAWKKARLINCTFNEPPLADAPQTVSWKLEGTDWTIHNHANVFSRTGLDIGARFFMQHLPENLEGEIVDLGCGNGVIGLTLLDKNPQAKVVFVDESPMAVASSRMNVETNMPEALDRCEFMINNALSGVKPFRFNAVLCNPPFHQQHALTDNVAWEMFHHARRCLKINGELYIVANRHLDYFHKLKKIFGNCTTIATNNKFVVLKTVKLGRRR.

Belongs to the methyltransferase superfamily. RlmG family.

It is found in the cytoplasm. It catalyses the reaction guanosine(1835) in 23S rRNA + S-adenosyl-L-methionine = N(2)-methylguanosine(1835) in 23S rRNA + S-adenosyl-L-homocysteine + H(+). Specifically methylates the guanine in position 1835 (m2G1835) of 23S rRNA. This chain is Ribosomal RNA large subunit methyltransferase G, found in Escherichia coli O139:H28 (strain E24377A / ETEC).